The primary structure comprises 460 residues: Argininosuccinate lyase (460 aa).

This sequence belongs to the lyase 1 family. Argininosuccinate lyase subfamily.

Its subcellular location is the cytoplasm. The enzyme catalyses 2-(N(omega)-L-arginino)succinate = fumarate + L-arginine. It participates in amino-acid biosynthesis; L-arginine biosynthesis; L-arginine from L-ornithine and carbamoyl phosphate: step 3/3. The polypeptide is Argininosuccinate lyase (Sulfurimonas denitrificans (strain ATCC 33889 / DSM 1251) (Thiomicrospira denitrificans (strain ATCC 33889 / DSM 1251))).